A 479-amino-acid chain; its full sequence is 3-phytase B (479 aa).

The first 19 residues, Met-1–Ala-19, serve as a signal peptide directing secretion. The active-site Nucleophile is the His-82. Residues Asn-106, Asn-191, Asn-227, Asn-250, and Asn-315 are each glycosylated (N-linked (GlcNAc...) asparagine). Residue Asp-338 is the Proton donor of the active site. Asn-425, Asn-442, and Asn-458 each carry an N-linked (GlcNAc...) asparagine glycan.

The protein belongs to the histidine acid phosphatase family.

It catalyses the reaction 1D-myo-inositol hexakisphosphate + H2O = 1D-myo-inositol 1,2,4,5,6-pentakisphosphate + phosphate. Its function is as follows. Catalyzes the hydrolysis of inorganic orthophosphate from phytate. The sequence is that of 3-phytase B (phyB) from Aspergillus niger.